A 73-amino-acid polypeptide reads, in one-letter code: NAD(P)H-quinone oxidoreductase subunit L (73 aa).

Transmembrane regions (helical) follow at residues 7-27 (LIGL…PFLF) and 44-64 (VLMF…APFM).

It belongs to the complex I NdhL subunit family. As to quaternary structure, NDH-1 can be composed of about 15 different subunits; different subcomplexes with different compositions have been identified which probably have different functions.

The protein resides in the cellular thylakoid membrane. It catalyses the reaction a plastoquinone + NADH + (n+1) H(+)(in) = a plastoquinol + NAD(+) + n H(+)(out). The catalysed reaction is a plastoquinone + NADPH + (n+1) H(+)(in) = a plastoquinol + NADP(+) + n H(+)(out). NDH-1 shuttles electrons from an unknown electron donor, via FMN and iron-sulfur (Fe-S) centers, to quinones in the respiratory and/or the photosynthetic chain. The immediate electron acceptor for the enzyme in this species is believed to be plastoquinone. Couples the redox reaction to proton translocation, and thus conserves the redox energy in a proton gradient. Cyanobacterial NDH-1 also plays a role in inorganic carbon-concentration. The protein is NAD(P)H-quinone oxidoreductase subunit L of Synechococcus sp. (strain JA-3-3Ab) (Cyanobacteria bacterium Yellowstone A-Prime).